Reading from the N-terminus, the 243-residue chain is UPF0246 protein SEQ_2141 (243 aa).

Belongs to the UPF0246 family.

The chain is UPF0246 protein SEQ_2141 from Streptococcus equi subsp. equi (strain 4047).